Reading from the N-terminus, the 197-residue chain is Imidazoleglycerol-phosphate dehydratase (197 aa).

This sequence belongs to the imidazoleglycerol-phosphate dehydratase family.

The protein localises to the cytoplasm. The enzyme catalyses D-erythro-1-(imidazol-4-yl)glycerol 3-phosphate = 3-(imidazol-4-yl)-2-oxopropyl phosphate + H2O. Its pathway is amino-acid biosynthesis; L-histidine biosynthesis; L-histidine from 5-phospho-alpha-D-ribose 1-diphosphate: step 6/9. The sequence is that of Imidazoleglycerol-phosphate dehydratase from Methylococcus capsulatus (strain ATCC 33009 / NCIMB 11132 / Bath).